Here is a 97-residue protein sequence, read N- to C-terminus: YcgL domain-containing protein PSPTO_3921 (97 aa).

One can recognise a YcgL domain in the interval 3–87 (RICSIYRSPK…AEDEYIEHLP (85 aa)).

The sequence is that of YcgL domain-containing protein PSPTO_3921 from Pseudomonas syringae pv. tomato (strain ATCC BAA-871 / DC3000).